We begin with the raw amino-acid sequence, 157 residues long: 2-C-methyl-D-erythritol 2,4-cyclodiphosphate synthase (157 aa).

A divalent metal cation-binding residues include D8 and H10. Residues 8–10 (DVH) and 34–35 (HS) contribute to the 4-CDP-2-C-methyl-D-erythritol 2-phosphate site. A divalent metal cation is bound at residue H42. Residues 56-58 (DIG), 132-135 (TTNE), and R142 contribute to the 4-CDP-2-C-methyl-D-erythritol 2-phosphate site.

It belongs to the IspF family. As to quaternary structure, homotrimer. It depends on a divalent metal cation as a cofactor.

The catalysed reaction is 4-CDP-2-C-methyl-D-erythritol 2-phosphate = 2-C-methyl-D-erythritol 2,4-cyclic diphosphate + CMP. It participates in isoprenoid biosynthesis; isopentenyl diphosphate biosynthesis via DXP pathway; isopentenyl diphosphate from 1-deoxy-D-xylulose 5-phosphate: step 4/6. Involved in the biosynthesis of isopentenyl diphosphate (IPP) and dimethylallyl diphosphate (DMAPP), two major building blocks of isoprenoid compounds. Catalyzes the conversion of 4-diphosphocytidyl-2-C-methyl-D-erythritol 2-phosphate (CDP-ME2P) to 2-C-methyl-D-erythritol 2,4-cyclodiphosphate (ME-CPP) with a corresponding release of cytidine 5-monophosphate (CMP). This is 2-C-methyl-D-erythritol 2,4-cyclodiphosphate synthase from Chlorobium phaeovibrioides (strain DSM 265 / 1930) (Prosthecochloris vibrioformis (strain DSM 265)).